The following is a 91-amino-acid chain: Small ribosomal subunit protein bS20 (91 aa).

Over residues 1 to 18 the composition is skewed to basic and acidic residues; sequence MPLHKSAEKRLRQSERRN. The disordered stretch occupies residues 1-25; sequence MPLHKSAEKRLRQSERRNARNRARK.

This sequence belongs to the bacterial ribosomal protein bS20 family.

Functionally, binds directly to 16S ribosomal RNA. The protein is Small ribosomal subunit protein bS20 of Chlorobium luteolum (strain DSM 273 / BCRC 81028 / 2530) (Pelodictyon luteolum).